The following is a 447-amino-acid chain: Glucose-6-phosphate isomerase (447 aa).

Glutamate 288 serves as the catalytic Proton donor. Catalysis depends on residues histidine 309 and lysine 423.

It belongs to the GPI family.

The protein localises to the cytoplasm. The enzyme catalyses alpha-D-glucose 6-phosphate = beta-D-fructose 6-phosphate. Its pathway is carbohydrate biosynthesis; gluconeogenesis. It functions in the pathway carbohydrate degradation; glycolysis; D-glyceraldehyde 3-phosphate and glycerone phosphate from D-glucose: step 2/4. In terms of biological role, catalyzes the reversible isomerization of glucose-6-phosphate to fructose-6-phosphate. This is Glucose-6-phosphate isomerase from Lactobacillus gasseri (strain ATCC 33323 / DSM 20243 / BCRC 14619 / CIP 102991 / JCM 1131 / KCTC 3163 / NCIMB 11718 / NCTC 13722 / AM63).